The following is a 500-amino-acid chain: NAD(P)H-quinone oxidoreductase chain 4, chloroplastic (500 aa).

Transmembrane regions (helical) follow at residues 4–24 (FPWLTIIVVFPISAGSLMLFL), 35–55 (YTICICILELLLTTYAFCYNF), 87–107 (IGTILLTGFITTLATLAAFPV), 113–130 (LFHFLMLAMYSGQIGSFS), 134–154 (LLLFFIMWELELIPVYLLLSM), 167–187 (FILYTAGSSIFLLIGVLGISL), 211–231 (ILFYIGFLIAFAVKSPIIPLH), 242–262 (HYSTCMLLAGILLKMGAYGLV), 272–292 (AHSMFSPWLMVVGTIQIIYAA), 305–325 (IAYSSVSHMGFIIIGISSITD), 330–350 (GAILQIISHGFIGAALFFLAG), 386–406 (LALPGMSGFVAELIVFFGIIT), 416–436 (ILIIFVMAIGMILTPIYLLSM), and 462–482 (LFLSISILLPIIGIGIYPDFV).

The protein belongs to the complex I subunit 4 family.

It localises to the plastid. The protein localises to the chloroplast thylakoid membrane. It carries out the reaction a plastoquinone + NADH + (n+1) H(+)(in) = a plastoquinol + NAD(+) + n H(+)(out). It catalyses the reaction a plastoquinone + NADPH + (n+1) H(+)(in) = a plastoquinol + NADP(+) + n H(+)(out). The chain is NAD(P)H-quinone oxidoreductase chain 4, chloroplastic from Nasturtium officinale (Watercress).